Here is a 156-residue protein sequence, read N- to C-terminus: Small ribosomal subunit protein uS7 (156 aa).

Belongs to the universal ribosomal protein uS7 family. Part of the 30S ribosomal subunit. Contacts proteins S9 and S11.

One of the primary rRNA binding proteins, it binds directly to 16S rRNA where it nucleates assembly of the head domain of the 30S subunit. Is located at the subunit interface close to the decoding center, probably blocks exit of the E-site tRNA. In Synechococcus sp. (strain WH7803), this protein is Small ribosomal subunit protein uS7.